Reading from the N-terminus, the 308-residue chain is E3 ubiquitin-protein ligase RING2 (308 aa).

N-acetylserine is present on Ser-2. The segment at 2–179 (SQAVQTNGTQ…AEDNGDSSHC (178 aa)) is interaction with HIP2. Phosphoserine is present on Ser-41. Residues 51–91 (CPICLDMLKNTMTTKECLHRFCADCIITALRSGNKECPTCR) form an RING-type zinc finger. Positions 93 to 98 (KLVSKR) are interaction with nucleosomes via an acidic patch on histone H2A and histone H2B. Lys-112 is covalently cross-linked (Glycyl lysine isopeptide (Lys-Gly) (interchain with G-Cter in ubiquitin)). 2 positions are modified to phosphoserine: Ser-143 and Ser-168. The tract at residues 157–206 (QRGKKQQIENGSGAEDNGDSSHCSNASTHSNQEAGPSNKRTKTSDDSGLE) is disordered. Over residues 176–191 (SSHCSNASTHSNQEAG) the composition is skewed to polar residues. Lys-249 is covalently cross-linked (Glycyl lysine isopeptide (Lys-Gly) (interchain with G-Cter in SUMO2)).

As to quaternary structure, component of chromatin-associated Polycomb (PcG) complexes. Component of a number of PRC1-like complexes; these complexes contain either the polycomb group ring finger protein PCGF1, or PCGF2, or PCGF3, or BMI1, or PCGF5, or PCGF6. Distinct PRC1-like complexes are composed of a RING1 subunit (RING1B or RING1A), one of the six PCGF proteins (PCGF1, PCGF2, PCGF3, BMI1, PCGF5 or PCGF6), one PHC protein (PHC1, PHC2 or PHC3) and one of the CBX proteins (CBX2, CBX4, CBX6, CBX7 or CBX8). Part of a complex that contains RNF2, UB2D3 and BMI1; within that complex RNF2 and BMI1 form a tight heterodimer, where UB2D3 interacts only with RNF2. The complex composed of RNF2, UB2D3 and BMI1 binds nucleosomes, and has activity only with nucleosomal histone H2A. Part of a complex that contains PCGF5, RNF2 and UBE2D3. Part of a complex that contains AUTS2, PCGF5, RNF2, CSNK2B and RYBP. Interacts with CBX6 and CBX8. Interacts with PHC1, PCGF2, RYBP, CBX7, CBX4, CBX2, RNF1/RING1, BMI1 and PHC2. Interaction with RYBP and CBX7 is mutually exclusive; both compete for the same binding site on RNF2. Component of repressive BCOR complex containing a Polycomb group subcomplex at least composed of RYBP, PCGF1, BCOR and RING1. Interacts with CBX2 and PHC1. Interacts with CHTOP. Interacts with AURKB. Part of the E2F6.com-1 complex in G0 phase composed of E2F6, MGA, MAX, TFDP1, CBX3, BAT8, EUHMTASE1, RNF1/RING1, RNF2/RING2, MBLR, L3MBTL2 and YAF2. Component of some MLL1/MLL complex, at least composed of the core components KMT2A/MLL1, ASH2L, HCFC1/HCF1, WDR5 and RBBP5, as well as the facultative components BACC1, CHD8, E2F6, HSP70, INO80C, KANSL1, LAS1L, MAX, MCRS1, MGA, MYST1/MOF, PELP1, PHF20, PRP31, RING2, RUVB1/TIP49A, RUVB2/TIP49B, SENP3, TAF1, TAF4, TAF6, TAF7, TAF9 and TEX10. Interacts with RYBP, HIP2 and TFCP2. Interacts with NUPR1. Interacts with SAMD7 in a PHC2-dependent manner. Monoubiquitinated, by auto-ubiquitination. Polyubiquitinated in the presence of UBE2D3 (in vitro).

It localises to the nucleus. It is found in the cytoplasm. Its subcellular location is the chromosome. The catalysed reaction is S-ubiquitinyl-[E2 ubiquitin-conjugating enzyme]-L-cysteine + [acceptor protein]-L-lysine = [E2 ubiquitin-conjugating enzyme]-L-cysteine + N(6)-ubiquitinyl-[acceptor protein]-L-lysine.. It participates in protein modification; protein ubiquitination. E3 ubiquitin-protein ligase that mediates monoubiquitination of 'Lys-119' of histone H2A (H2AK119Ub), thereby playing a central role in histone code and gene regulation. H2AK119Ub gives a specific tag for epigenetic transcriptional repression and participates in X chromosome inactivation of female mammals. May be involved in the initiation of both imprinted and random X inactivation. Essential component of a Polycomb group (PcG) multiprotein PRC1-like complex, a complex class required to maintain the transcriptionally repressive state of many genes, including Hox genes, throughout development. PcG PRC1 complex acts via chromatin remodeling and modification of histones, rendering chromatin heritably changed in its expressibility. E3 ubiquitin-protein ligase activity is enhanced by BMI1/PCGF4. Acts as the main E3 ubiquitin ligase on histone H2A of the PRC1 complex, while RING1 may rather act as a modulator of RNF2/RING2 activity. Plays a role in the transcriptional repression of genes that are required for pluripotency in embryonic stem cells, thereby contributing to differentiation of the ectodermal and endodermal germ layers. Association with the chromosomal DNA is cell-cycle dependent. In resting B- and T-lymphocytes, interaction with AURKB leads to block its activity, thereby maintaining transcription in resting lymphocytes. Also acts as a negative regulator of autophagy by mediating ubiquitination of AMBRA1, leading to its subsequent degradation. This Rattus norvegicus (Rat) protein is E3 ubiquitin-protein ligase RING2 (Rnf2).